The following is a 479-amino-acid chain: UDP-glycosyltransferase 71B6 (479 aa).

UDP-alpha-D-glucose contacts are provided by residues serine 275, 342-344, 359-367, and 381-384; these read AEQ, HGGWNSTLE, and YAEQ.

The protein belongs to the UDP-glycosyltransferase family.

Its function is as follows. Glucosyltransferase that glucosylates the (+) enantiomer of abscisic acid ((+)-ABA). Is not active on structural analogs with alterations to the 8'- and 9'- methyl groups. The polypeptide is UDP-glycosyltransferase 71B6 (UGT71B6) (Arabidopsis thaliana (Mouse-ear cress)).